The following is a 391-amino-acid chain: 3-ketoacyl-CoA thiolase, peroxisomal (391 aa).

C92 (acyl-thioester intermediate) is an active-site residue. Active-site proton acceptor residues include H335 and C366.

Belongs to the thiolase-like superfamily. Thiolase family. In terms of assembly, homodimer.

The protein localises to the peroxisome. The catalysed reaction is an acyl-CoA + acetyl-CoA = a 3-oxoacyl-CoA + CoA. It participates in lipid metabolism; fatty acid metabolism. This is 3-ketoacyl-CoA thiolase, peroxisomal (FOX3) from Encephalitozoon cuniculi (strain GB-M1) (Microsporidian parasite).